The chain runs to 80 residues: Omega-conotoxin-like PuIA (80 aa).

The N-terminal stretch at Met-1 to Ala-22 is a signal peptide. A propeptide spanning residues Asp-23 to Arg-50 is cleaved from the precursor. 3 disulfide bridges follow: Cys-52–Cys-70, Cys-59–Cys-74, and Cys-69–Cys-78.

This sequence belongs to the conotoxin O1 superfamily. Expressed by the venom duct.

The protein resides in the secreted. In terms of biological role, omega-conotoxins act at presynaptic membranes, they bind and block voltage-gated calcium channels (Cav). This is Omega-conotoxin-like PuIA from Conus pulicarius (Flea-bitten cone).